The following is a 359-amino-acid chain: Quinolinate synthase (359 aa).

Residues H81 and S99 each coordinate iminosuccinate. A [4Fe-4S] cluster-binding site is contributed by C144. Residues 170–172 (YVN) and S187 each bind iminosuccinate. [4Fe-4S] cluster is bound at residue C229. Residues 255-257 (HPE) and T272 contribute to the iminosuccinate site. C315 serves as a coordination point for [4Fe-4S] cluster.

This sequence belongs to the quinolinate synthase family. Type 2 subfamily. The cofactor is [4Fe-4S] cluster.

The protein localises to the cytoplasm. It catalyses the reaction iminosuccinate + dihydroxyacetone phosphate = quinolinate + phosphate + 2 H2O + H(+). It participates in cofactor biosynthesis; NAD(+) biosynthesis; quinolinate from iminoaspartate: step 1/1. Catalyzes the condensation of iminoaspartate with dihydroxyacetone phosphate to form quinolinate. This chain is Quinolinate synthase, found in Sinorhizobium fredii (strain NBRC 101917 / NGR234).